A 307-amino-acid polypeptide reads, in one-letter code: 2-haloacid dehalogenase, configuration-inverting (307 aa).

Belongs to the HAD-like hydrolase superfamily. S-2-haloalkanoic acid dehalogenase family. Homodimer.

It carries out the reaction an (S)-2-haloacid + H2O = a (2R)-2-hydroxycarboxylate + a halide anion + H(+). The enzyme catalyses an (R)-2-haloacid + H2O = a (2S)-2-hydroxycarboxylate + a halide anion + H(+). Dehalogenates both (S)- and (R)-2-haloalkanoic acids to the corresponding (R)- and (S)-hydroxyalkanoic acids, respectively, with inversion of configuration at C-2. Acts on 2-haloalkanoic acids whose carbon chain lengths are five or less. The protein is 2-haloacid dehalogenase, configuration-inverting of Pseudomonas sp. (strain 113).